Here is a 223-residue protein sequence, read N- to C-terminus: UPF0441 protein KPN78578_33850 (223 aa).

The tract at residues 165–223 is disordered; sequence SYGAAQPGRTMNVPKTAMAPKPATTTTVTRGGFGESVAKQSTMQRSAAGSTSSSRSMGG. Composition is skewed to low complexity over residues 177-193 and 209-223; these read VPKT…TTVT and RSAA…SMGG.

This sequence belongs to the UPF0441 family.

The sequence is that of UPF0441 protein KPN78578_33850 from Klebsiella pneumoniae subsp. pneumoniae (strain ATCC 700721 / MGH 78578).